Here is a 497-residue protein sequence, read N- to C-terminus: Delayed-rectifier potassium channel regulatory subunit KCNS1 (497 aa).

Over 1-186 (MVSEFPGPGS…LTMENPGYSL (186 aa)) the chain is Cytoplasmic. The helical transmembrane segment at 187 to 208 (PSKLFSCVSIGVVLASIAAMCI) threads the bilayer. Residues 209 to 239 (HSLPEYQAREAAAAVAAVAAGRSAEEVRDDP) lie on the Extracellular side of the membrane. A helical transmembrane segment spans residues 240–262 (VLRRLEYFCIAWFSFEVSSRLLL). Residues 263–273 (APSTRNFFCHP) lie on the Cytoplasmic side of the membrane. A helical transmembrane segment spans residues 274-291 (LNLIDIVSVLPFYLTLLA). Topologically, residues 292–309 (GAALGDQRGASGEELGDL) are extracellular. The chain crosses the membrane as a helical; Voltage-sensor span at residues 310–330 (GKVVQVFRLMRIFRVLKLARH). Over 331–345 (STGLRSLGATLKHSY) the chain is Cytoplasmic. Residues 346–367 (REVGILLLYLAVGVSVFSGVAY) traverse the membrane as a helical segment. The Extracellular portion of the chain corresponds to 368–379 (TAEEENEGFHTI). Residues 380 to 391 (PACWWWGTVSMT) constitute an intramembrane region (helical). The Selectivity filter signature appears at 392–397 (TVGYGD). An intramembrane segment occupies 392–399 (TVGYGDVV). The Extracellular segment spans residues 400 to 406 (PETVGGK). A helical membrane pass occupies residues 407–435 (LAASGCILGGILVVALPITIIFNKFSHFY). Over 436–497 (RRQKALEAAV…PREPAKSHSY (62 aa)) the chain is Cytoplasmic. A disordered region spans residues 464 to 497 (SDVSLETSRDTSQEGRSTDLETQAPREPAKSHSY). Basic and acidic residues predominate over residues 470-482 (TSRDTSQEGRSTD).

The protein belongs to the potassium channel family. S (TC 1.A.1.2) subfamily. Kv9.1/KCNS1 sub-subfamily. In terms of assembly, heterotetramer with KCNB1 and KCNB2. Does not form homomultimers. In terms of tissue distribution, detected in brain, but not in the other tissues tested. The highest levels of expression are in olfactory bulb, cerebral cortex, hippocampus, habenula, basolateral amygdaloid nuclei and cerebellum.

The protein localises to the cell membrane. Its function is as follows. Potassium channel regulatory subunit that modulate the delayed rectifier voltage-gated potassium channel activity of KCNB1 and KCNB2 by altering their kinetics, expression levels, and shifting the half-inactivation potential to more polarized values. While it does not form functional channels on its own, it can form functional heterotetrameric channels with KCNB1 and KCNB2. Each regulatory subunit has unique regulatory properties that can lead to extensive inhibition, significant changes in kinetics, and/or substantial shifts in the voltage dependencies of the inactivation process. The chain is Delayed-rectifier potassium channel regulatory subunit KCNS1 from Mus musculus (Mouse).